The primary structure comprises 310 residues: MDNDKIDQHSDEIEVESEEKERGKKIEIDEDRLPSRAMAIHEHIRQDGEKELERDAMALLWSAIAAGLSMGASLLAKGIFQVELEGVPGSFLLENLGYTFGFIIVIMARQQLFTENTVTAVLPVMQKPTMSNVGLLIRLWGVVLLGNILGTGIAAWAFEYMPIFNEETRDAFVKIGMDVMKNTPSEMFANAIISGWLIATMVWMFPAAGAAKIVVIILMTWLIALGDTTHIVVGSVEILYLVFNGTLHWSDFIWPFALPTLAGNICGGTFIFALMSHAQIRNDMSNKRKAEARQKAERAENIKKNYKNPA.

Positions 1-12 (MDNDKIDQHSDE) are enriched in basic and acidic residues. The disordered stretch occupies residues 1–27 (MDNDKIDQHSDEIEVESEEKERGKKIE). Over 1 to 58 (MDNDKIDQHSDEIEVESEEKERGKKIEIDEDRLPSRAMAIHEHIRQDGEKELERDAMA) the chain is Cytoplasmic. The chain crosses the membrane as a helical span at residues 59 to 81 (LLWSAIAAGLSMGASLLAKGIFQ). The Periplasmic segment spans residues 82-90 (VELEGVPGS). The chain crosses the membrane as a helical span at residues 91–113 (FLLENLGYTFGFIIVIMARQQLF). Residues 114–133 (TENTVTAVLPVMQKPTMSNV) lie on the Cytoplasmic side of the membrane. The helical transmembrane segment at 134–156 (GLLIRLWGVVLLGNILGTGIAAW) threads the bilayer. Residues 157–186 (AFEYMPIFNEETRDAFVKIGMDVMKNTPSE) lie on the Periplasmic side of the membrane. Residues 187-206 (MFANAIISGWLIATMVWMFP) traverse the membrane as a helical segment. Residues 207 to 212 (AAGAAK) are Cytoplasmic-facing. The helical transmembrane segment at 213–232 (IVVIILMTWLIALGDTTHIV) threads the bilayer. At 233-251 (VGSVEILYLVFNGTLHWSD) the chain is on the periplasmic side. The helical transmembrane segment at 252 to 274 (FIWPFALPTLAGNICGGTFIFAL) threads the bilayer. The Cytoplasmic portion of the chain corresponds to 275-310 (MSHAQIRNDMSNKRKAEARQKAERAENIKKNYKNPA). A compositionally biased stretch (basic and acidic residues) spans 291–303 (EARQKAERAENIK). Residues 291-310 (EARQKAERAENIKKNYKNPA) form a disordered region.

Its subcellular location is the cell inner membrane. In Escherichia coli (strain K12), this protein is Inner membrane protein YfdC (yfdC).